The following is a 120-amino-acid chain: Basic phospholipase A2 homolog piratoxin-3 (120 aa).

7 disulfide bridges follow: Cys26-Cys113, Cys28-Cys44, Cys43-Cys94, Cys49-Cys120, Cys50-Cys87, Cys57-Cys81, and Cys75-Cys85. Positions 104–115 are important for membrane-damaging activities in eukaryotes and bacteria; heparin-binding; the sequence is KKYRYHLKPCKK.

It belongs to the phospholipase A2 family. Group II subfamily. D49 sub-subfamily. Homodimer; non-covalently linked (probable alternative/compact dimer conformation). In terms of tissue distribution, expressed by the venom gland.

It is found in the secreted. Snake venom phospholipase A2 (PLA2) that lacks enzymatic activity. Shows high myotoxin activities. Also has anticoagulant activity. A model of myotoxic mechanism has been proposed: an apo Lys49-PLA2 is activated by the entrance of a hydrophobic molecule (e.g. fatty acid) at the hydrophobic channel of the protein leading to a reorientation of a monomer. This reorientation causes a transition between 'inactive' to 'active' states, causing alignment of C-terminal and membrane-docking sites (MDoS) side-by-side and putting the membrane-disruption sites (MDiS) in the same plane, exposed to solvent and in a symmetric position for both monomers. The MDoS region stabilizes the toxin on membrane by the interaction of charged residues with phospholipid head groups. Subsequently, the MDiS region destabilizes the membrane with penetration of hydrophobic residues. This insertion causes a disorganization of the membrane, allowing an uncontrolled influx of ions (i.e. calcium and sodium), and eventually triggering irreversible intracellular alterations and cell death. This is Basic phospholipase A2 homolog piratoxin-3 from Bothrops pirajai (Piraja's lancehead).